Here is a 176-residue protein sequence, read N- to C-terminus: Large ribosomal subunit protein uL6 (176 aa).

This sequence belongs to the universal ribosomal protein uL6 family. As to quaternary structure, part of the 50S ribosomal subunit.

Its function is as follows. This protein binds to the 23S rRNA, and is important in its secondary structure. It is located near the subunit interface in the base of the L7/L12 stalk, and near the tRNA binding site of the peptidyltransferase center. The chain is Large ribosomal subunit protein uL6 from Paraburkholderia xenovorans (strain LB400).